A 1136-amino-acid polypeptide reads, in one-letter code: Rho GTPase-activating protein 45 (1136 aa).

Disordered stretches follow at residues 1-73 and 91-110; these read MFSR…RHAS and HRSPLTAASPGELPTEGAGP. Phosphoserine is present on residues serine 23, serine 25, serine 73, serine 93, and serine 99. Residues 269–539 enclose the F-BAR domain; that stretch reads EEVDVLLQRC…SSKLYDPGQQ (271 aa). Coiled coils occupy residues 376-412 and 440-499; these read EHEKRRKEIKEAWHRAQRKLQEAESNLRKAKQGYVQR and TATK…RQSD. Residues serine 569, serine 578, serine 592, and serine 619 each carry the phosphoserine modification. Residues 583–662 form a disordered region; the sequence is DVARPEAAGS…SSTEELVDPD (80 aa). Low complexity predominate over residues 646–655; it reads TSSSGTMSST. A Phorbol-ester/DAG-type zinc finger spans residues 702 to 747; the sequence is THRLRKLRTPAKCRECNSYVYFQGAECEECCLACHKKCLETLAIQC. The 214-residue stretch at 761–974 folds into the Rho-GAP domain; it reads QDFSHAARSA…TLIVHYGLVF (214 aa). 4 positions are modified to phosphoserine: serine 949, serine 1027, serine 1030, and serine 1032. The interval 1061–1136 is disordered; the sequence is EASLEVASGS…SCRERQPEFV (76 aa). Residues 1095–1109 show a composition bias toward polar residues; that stretch reads QQLSGFNTNQSNNVL.

As to quaternary structure, HA-1 forms a complex with MHC class I HLA-A*0201. As to expression, expressed on cells of the hematopoietic lineage. Detected in dendritic cells and epidermal Langerhans cells. Expressed in peripheral blood mononuclear cells, in all leukemia/lymphoma cell lines. Detected also in some solid tumors and tissues such as cancerous and non-cancerous tissue.

Its subcellular location is the cytoplasm. It is found in the cell projection. It localises to the ruffle membrane. In terms of biological role, contains a GTPase activator for the Rho-type GTPases (RhoGAP) domain that would be able to negatively regulate the actin cytoskeleton as well as cell spreading. However, also contains N-terminally a BAR-domin which is able to play an autoinhibitory effect on this RhoGAP activity. Its function is as follows. Precursor of the histocompatibility antigen HA-1. More generally, minor histocompatibility antigens (mHags) refer to immunogenic peptide which, when complexed with MHC, can generate an immune response after recognition by specific T-cells. The peptides are derived from polymorphic intracellular proteins, which are cleaved by normal pathways of antigen processing. The binding of these peptides to MHC class I or class II molecules and its expression on the cell surface can stimulate T-cell responses and thereby trigger graft rejection or graft-versus-host disease (GVHD) after hematopoietic stem cell transplantation from HLA-identical sibling donor. GVHD is a frequent complication after bone marrow transplantation (BMT), due to mismatch of minor histocompatibility antigen in HLA-matched sibling marrow transplants. Specifically, mismatching for mHag HA-1 which is recognized as immunodominant, is shown to be associated with the development of severe GVHD after HLA-identical BMT. HA-1 is presented to the cell surface by MHC class I HLA-A*0201, but also by other HLA-A alleles. This complex specifically elicits donor-cytotoxic T-lymphocyte (CTL) reactivity against hematologic malignancies after treatment by HLA-identical allogenic BMT. It induces cell recognition and lysis by CTL. This chain is Rho GTPase-activating protein 45, found in Homo sapiens (Human).